We begin with the raw amino-acid sequence, 538 residues long: UNC93-like protein (538 aa).

N-linked (GlcNAc...) asparagine glycosylation is present at Asn45. Helical transmembrane passes span 46 to 66, 80 to 100, 105 to 125, 128 to 148, and 170 to 190; these read ISII…TANL, SLSA…TLII, VKWT…FQLF, FYTL…MWAS, and AIIV…ELWG. N-linked (GlcNAc...) asparagine glycosylation occurs at Asn210. 7 consecutive transmembrane segments (helical) span residues 244-264, 305-325, 338-358, 366-386, 394-414, 435-455, and 457-477; these read IFEI…IIAF, LLIP…ADFT, IGFV…LFGS, TPII…ELFW, IIFY…QTQI, LWES…CTQM, and LYIL…VEIL.

This sequence belongs to the unc-93 family.

The protein resides in the membrane. This is UNC93-like protein from Drosophila melanogaster (Fruit fly).